Consider the following 367-residue polypeptide: Folliculin-like protein bhd1 (367 aa).

Disordered regions lie at residues 41-75 (RSIG…QSST) and 92-115 (SKGP…SPIS). The span at 54 to 64 (EAFKNELDNRN) shows a compositional bias: basic and acidic residues. Polar residues-rich tracts occupy residues 65 to 75 (NADSQSLQSST) and 99 to 115 (RVNS…SPIS). The 172-residue stretch at 131–302 (FSVPDVQPRL…SNIGTAPSYE (172 aa)) folds into the uDENN FLCN/SMCR8-type domain.

It belongs to the folliculin family.

It is found in the nucleus. Its subcellular location is the cytoplasm. In Schizosaccharomyces pombe (strain 972 / ATCC 24843) (Fission yeast), this protein is Folliculin-like protein bhd1 (bhd1).